Here is a 199-residue protein sequence, read N- to C-terminus: Transgelin-3 (199 aa).

A Calponin-homology (CH) domain is found at 24–136 (ADLENKLVDW…RTLMALGSVA (113 aa)). The residue at position 163 (Ser-163) is a Phosphoserine. One copy of the Calponin-like repeat lies at 174–199 (IGLQMGSNKGASQAGMTGYGMPRQIM). Over residues 176–188 (LQMGSNKGASQAG) the composition is skewed to polar residues. The interval 176–199 (LQMGSNKGASQAGMTGYGMPRQIM) is disordered.

The protein belongs to the calponin family. Widely expressed in the brain. Expression is increased in the superior frontal cortex of alcoholics, but not in the motor cortex or cerebellum.

The polypeptide is Transgelin-3 (TAGLN3) (Homo sapiens (Human)).